Consider the following 82-residue polypeptide: ATP synthase subunit c, chloroplastic (82 aa).

2 helical membrane passes run 4–24 (IISAASVIAAGLAIGLAAIGP) and 57–77 (LAFMEALTIYGLVVALALLFA).

This sequence belongs to the ATPase C chain family. As to quaternary structure, F-type ATPases have 2 components, F(1) - the catalytic core - and F(0) - the membrane proton channel. F(1) has five subunits: alpha(3), beta(3), gamma(1), delta(1), epsilon(1). F(0) has four main subunits: a(1), b(1), b'(1) and c(10-14). The alpha and beta chains form an alternating ring which encloses part of the gamma chain. F(1) is attached to F(0) by a central stalk formed by the gamma and epsilon chains, while a peripheral stalk is formed by the delta, b and b' chains.

The protein resides in the plastid. The protein localises to the chloroplast thylakoid membrane. In terms of biological role, f(1)F(0) ATP synthase produces ATP from ADP in the presence of a proton or sodium gradient. F-type ATPases consist of two structural domains, F(1) containing the extramembraneous catalytic core and F(0) containing the membrane proton channel, linked together by a central stalk and a peripheral stalk. During catalysis, ATP synthesis in the catalytic domain of F(1) is coupled via a rotary mechanism of the central stalk subunits to proton translocation. Functionally, key component of the F(0) channel; it plays a direct role in translocation across the membrane. A homomeric c-ring of between 10-14 subunits forms the central stalk rotor element with the F(1) delta and epsilon subunits. This is ATP synthase subunit c, chloroplastic from Trieres chinensis (Marine centric diatom).